Here is an 84-residue protein sequence, read N- to C-terminus: Large ribosomal subunit protein bL27 (84 aa).

Residues 1 to 21 (MAHKKAGGSTRNGRDSNPKYL) form a disordered region.

It belongs to the bacterial ribosomal protein bL27 family.

This Francisella tularensis subsp. holarctica (strain FTNF002-00 / FTA) protein is Large ribosomal subunit protein bL27.